The following is a 370-amino-acid chain: GTPase Obg (370 aa).

Residues 1–159 (MKFIDEARIE…RMLRLELKVL (159 aa)) form the Obg domain. Residues 127 to 146 (NLHFKSSTNRAPRQKTDGKP) form a disordered region. Residues 160–334 (ADVGLLGMPN…LCYAIYDYLA (175 aa)) enclose the OBG-type G domain. GTP-binding positions include 166–173 (GMPNAGKS), 191–195 (FTTLA), 213–216 (DIPG), 284–287 (NKLD), and 315–317 (SAL). Mg(2+) is bound by residues Ser-173 and Thr-193. The segment at 350–370 (ADVRFRDAPPSDGGATSGGDA) is disordered.

The protein belongs to the TRAFAC class OBG-HflX-like GTPase superfamily. OBG GTPase family. As to quaternary structure, monomer. It depends on Mg(2+) as a cofactor.

It localises to the cytoplasm. In terms of biological role, an essential GTPase which binds GTP, GDP and possibly (p)ppGpp with moderate affinity, with high nucleotide exchange rates and a fairly low GTP hydrolysis rate. Plays a role in control of the cell cycle, stress response, ribosome biogenesis and in those bacteria that undergo differentiation, in morphogenesis control. The sequence is that of GTPase Obg from Burkholderia vietnamiensis (strain G4 / LMG 22486) (Burkholderia cepacia (strain R1808)).